Reading from the N-terminus, the 205-residue chain is Protein phosphatase inhibitor 2 (205 aa).

2 disordered regions span residues 1-46 (MAAS…KSQK) and 64-205 (GLMK…SQSS). Ala-2 carries the post-translational modification N-acetylalanine. Required for binding PPP1CC regions lie at residues 12–17 (KGILKN) and 43–55 (KSQK…ILAT). Polar residues predominate over residues 17–26 (NKTSSTSSRV). A compositionally biased stretch (basic and acidic residues) spans 35–46 (SVDEELSKKSQK). Ser-44 carries the post-translational modification Phosphoserine; by ATM. Phosphothreonine; by GSK3 is present on Thr-73. Residues 80 to 91 (GDDDDAYSDTET) are compositionally biased toward acidic residues. At Ser-87 the chain carries Phosphoserine. Phosphothreonine occurs at positions 89, 92, and 96. Positions 110–120 (SEPKYRIREQE) are enriched in basic and acidic residues. Ser-121, Ser-122, Ser-127, and Ser-130 each carry phosphoserine. A compositionally biased stretch (acidic residues) spans 121–130 (SSGEEDSDLS). A compositionally biased stretch (basic and acidic residues) spans 131–143 (PEEREKKRQFEMK). Residues 147–150 (HYNE) are required for binding PPP1CC catalytic center, displacing metal ions and inhibition of PPP1CC catalytic activity. Over residues 167 to 179 (DDEEDEEMSETAD) the composition is skewed to acidic residues. Residues 182 to 205 (SMNTEESNQGSTPSDQRQNKSQSS) are compositionally biased toward polar residues.

The protein belongs to the protein phosphatase inhibitor 2 family. As to quaternary structure, heterodimer with PP1. Phosphorylation on Ser-44 by ATM activates PP1 by dissociating the PP1-PPP1R2 complex. Phosphorylation on Thr-73 by GSK3 activates PP1 by dissociating the PP1-PPP1R2 complex.

In terms of biological role, inhibitor of protein-phosphatase 1. The polypeptide is Protein phosphatase inhibitor 2 (PPP1R2) (Oryctolagus cuniculus (Rabbit)).